A 530-amino-acid chain; its full sequence is Bifunctional purine biosynthesis protein PurH (530 aa).

One can recognise an MGS-like domain in the interval 1–148 (MNNARPIRRA…KNHKDVTIVV (148 aa)).

This sequence belongs to the PurH family.

The enzyme catalyses (6R)-10-formyltetrahydrofolate + 5-amino-1-(5-phospho-beta-D-ribosyl)imidazole-4-carboxamide = 5-formamido-1-(5-phospho-D-ribosyl)imidazole-4-carboxamide + (6S)-5,6,7,8-tetrahydrofolate. The catalysed reaction is IMP + H2O = 5-formamido-1-(5-phospho-D-ribosyl)imidazole-4-carboxamide. The protein operates within purine metabolism; IMP biosynthesis via de novo pathway; 5-formamido-1-(5-phospho-D-ribosyl)imidazole-4-carboxamide from 5-amino-1-(5-phospho-D-ribosyl)imidazole-4-carboxamide (10-formyl THF route): step 1/1. It participates in purine metabolism; IMP biosynthesis via de novo pathway; IMP from 5-formamido-1-(5-phospho-D-ribosyl)imidazole-4-carboxamide: step 1/1. In Aliivibrio fischeri (strain MJ11) (Vibrio fischeri), this protein is Bifunctional purine biosynthesis protein PurH.